Reading from the N-terminus, the 109-residue chain is Nascent polypeptide-associated complex protein (109 aa).

The NAC-A/B domain occupies 3 to 69; sequence PMNPKQLKKL…TEEERVVLKI (67 aa).

The protein belongs to the NAC-alpha family. In terms of assembly, homodimer. Interacts with the ribosome. Binds ribosomal RNA.

In terms of biological role, contacts the emerging nascent chain on the ribosome. The protein is Nascent polypeptide-associated complex protein of Pyrococcus abyssi (strain GE5 / Orsay).